The following is a 157-amino-acid chain: Cell cycle regulator of non-homologous end joining (157 aa).

Met-1 is subject to N-acetylmethionine. The KBM motif lies at 1 to 21 (METLKSKTKTRVLPSWMTAPV). Positions 80–91 (KPWEQRSLEATD) are enriched in basic and acidic residues. Positions 80 to 148 (KPWEQRSLEA…EEEKEEEDAL (69 aa)) are disordered. Residues 96–106 (SPPCSSSPGSS) are compositionally biased toward low complexity. The short motif at 147–157 (ALKYVREIFFS) is the XLM element.

As to quaternary structure, interacts (via KBM motif) with XRCC5/Ku80 and XRCC6/Ku70 heterodimer. Interacts (via XLF motif) with TRIM28/KAP1, ATM, MRE11, NBN and RAD50. Interacts with splicing factor SF3B1. Interacts with ERCC6L2; this interaction is DNA independent.

The protein localises to the cytoplasm. It localises to the nucleus. It is found in the chromosome. Cell-cycle-specific regulator of classical non-homologous end joining (NHEJ) of DNA double-strand break (DSB) repair, which can act both as an activator or inhibitor of NHEJ, depending on the cell cycle phase. Acts as a regulator of DNA repair pathway choice by specifically inhibiting classical NHEJ during the S and G2 phases, thereby promoting error-free repair by homologous recombination during cell cycle phases when sister chromatids are present. Preferentially protects single-stranded overhangs at break sites by inhibiting classical NHEJ, thereby creating a local environment that favors homologous recombination. Acts via interaction with XRCC5/Ku80 and XRCC6/Ku70. In contrast, acts as an activator of NHEJ during G1 phase of the cell cycle: promotes classical NHEJ in G1 phase cells via multivalent interactions that increase the affinity of DNA damage response proteins for DSB-associated chromatin. Also involved in immunoglobulin V(D)J recombination. May also act as an indirect regulator of proteasome. The polypeptide is Cell cycle regulator of non-homologous end joining (Mus musculus (Mouse)).